Here is a 570-residue protein sequence, read N- to C-terminus: Proline--tRNA ligase (570 aa).

This sequence belongs to the class-II aminoacyl-tRNA synthetase family. ProS type 1 subfamily. In terms of assembly, homodimer.

It is found in the cytoplasm. It carries out the reaction tRNA(Pro) + L-proline + ATP = L-prolyl-tRNA(Pro) + AMP + diphosphate. In terms of biological role, catalyzes the attachment of proline to tRNA(Pro) in a two-step reaction: proline is first activated by ATP to form Pro-AMP and then transferred to the acceptor end of tRNA(Pro). As ProRS can inadvertently accommodate and process non-cognate amino acids such as alanine and cysteine, to avoid such errors it has two additional distinct editing activities against alanine. One activity is designated as 'pretransfer' editing and involves the tRNA(Pro)-independent hydrolysis of activated Ala-AMP. The other activity is designated 'posttransfer' editing and involves deacylation of mischarged Ala-tRNA(Pro). The misacylated Cys-tRNA(Pro) is not edited by ProRS. The polypeptide is Proline--tRNA ligase (Clostridium tetani (strain Massachusetts / E88)).